Reading from the N-terminus, the 230-residue chain is Esterase OVCA2 (230 aa).

Residues S124, D182, and H209 each act as charge relay system in the active site.

It belongs to the LovG family.

The catalysed reaction is a carboxylic ester + H2O = an alcohol + a carboxylate + H(+). Functionally, exhibits ester hydrolase activity with a strong preference for long-chain alkyl ester substrates and high selectivity against a variety of short, branched, and substituted esters. Is able to hydrolyze ester bonds within a wide range of p-nitrophenyl derivatives (C2-C14) in vitro, with a strong preference toward substrates of &gt;8 carbons. In Xenopus tropicalis (Western clawed frog), this protein is Esterase OVCA2 (ovca2).